The primary structure comprises 168 residues: Glycine-rich RNA-binding protein 2 (168 aa).

Residues 8-86 (YRCFVGGLAW…RNITVNQAQS (79 aa)) form the RRM domain. Residues 148-168 (GYGGGGGYGGNRGDSGGNWRN) form a disordered region.

In terms of biological role, possibly has a role in RNA transcription or processing during stress. This chain is Glycine-rich RNA-binding protein 2 (GRP2), found in Sorghum bicolor (Sorghum).